The primary structure comprises 111 residues: T cell receptor beta variable 29-1 (111 aa).

A signal peptide spans 1 to 16 (MLSLLLLLLGLGSVFS). The region spanning 17–111 (AVISQKPSRD…DSSIYLCSVE (95 aa)) is the Ig-like domain. Cysteines 38 and 108 form a disulfide. N-linked (GlcNAc...) asparagine glycosylation is present at Asn87.

In terms of assembly, alpha-beta TR is a heterodimer composed of an alpha and beta chain; disulfide-linked. The alpha-beta TR is associated with the transmembrane signaling CD3 coreceptor proteins to form the TR-CD3 (TcR or TCR). The assembly of alpha-beta TR heterodimers with CD3 occurs in the endoplasmic reticulum where a single alpha-beta TR heterodimer associates with one CD3D-CD3E heterodimer, one CD3G-CD3E heterodimer and one CD247 homodimer forming a stable octameric structure. CD3D-CD3E and CD3G-CD3E heterodimers preferentially associate with TR alpha and TR beta chains, respectively. The association of the CD247 homodimer is the last step of TcR assembly in the endoplasmic reticulum and is required for transport to the cell surface.

The protein resides in the cell membrane. Functionally, v region of the variable domain of T cell receptor (TR) beta chain that participates in the antigen recognition. Alpha-beta T cell receptors are antigen specific receptors which are essential to the immune response and are present on the cell surface of T lymphocytes. Recognize peptide-major histocompatibility (MH) (pMH) complexes that are displayed by antigen presenting cells (APC), a prerequisite for efficient T cell adaptive immunity against pathogens. Binding of alpha-beta TR to pMH complex initiates TR-CD3 clustering on the cell surface and intracellular activation of LCK that phosphorylates the ITAM motifs of CD3G, CD3D, CD3E and CD247 enabling the recruitment of ZAP70. In turn ZAP70 phosphorylates LAT, which recruits numerous signaling molecules to form the LAT signalosome. The LAT signalosome propagates signal branching to three major signaling pathways, the calcium, the mitogen-activated protein kinase (MAPK) kinase and the nuclear factor NF-kappa-B (NF-kB) pathways, leading to the mobilization of transcription factors that are critical for gene expression and essential for T cell growth and differentiation. The T cell repertoire is generated in the thymus, by V-(D)-J rearrangement. This repertoire is then shaped by intrathymic selection events to generate a peripheral T cell pool of self-MH restricted, non-autoaggressive T cells. Post-thymic interaction of alpha-beta TR with the pMH complexes shapes TR structural and functional avidity. This chain is T cell receptor beta variable 29-1, found in Homo sapiens (Human).